Consider the following 122-residue polypeptide: Large ribosomal subunit protein uL14 (122 aa).

It belongs to the universal ribosomal protein uL14 family. As to quaternary structure, part of the 50S ribosomal subunit. Forms a cluster with proteins L3 and L19. In the 70S ribosome, L14 and L19 interact and together make contacts with the 16S rRNA in bridges B5 and B8.

Its function is as follows. Binds to 23S rRNA. Forms part of two intersubunit bridges in the 70S ribosome. In Novosphingobium aromaticivorans (strain ATCC 700278 / DSM 12444 / CCUG 56034 / CIP 105152 / NBRC 16084 / F199), this protein is Large ribosomal subunit protein uL14.